The sequence spans 579 residues: YTH domain-containing family protein 2 (579 aa).

A disordered region spans residues 1–45 (MSASSLLEQRPKGQGNKVQNGSVHQKDGLNDDDFEPYLSPQARPN). S2 is modified (N-acetylserine). S2, S4, S5, S22, S39, and S196 each carry phosphoserine. The tract at residues 2 to 384 (SASSLLEQRP…QAGSGSTPSE (383 aa)) is localization to mRNA processing bodies (P-bodies). A disordered region spans residues 247-387 (AKQQPKLKTK…SGSTPSEPHP (141 aa)). Residues 291-316 (ALVQNIGQPTQGSPQHVGQQANNSPP) are compositionally biased toward polar residues. The segment covering 337-349 (AQLSVQQQAAQPT) has biased composition (low complexity). Position 359 is a phosphoserine (S359). Positions 359-371 (SGFGHNGVDGNGV) are enriched in gly residues. The span at 372–383 (GQSQAGSGSTPS) shows a compositional bias: polar residues. Residues 385–579 (PHPVLEKLRS…VKKERQGRGK (195 aa)) are interaction with m6A-containing mRNAs. A Phosphoserine modification is found at S394. The YTH domain maps to 410 to 544 (GRVFIIKSYS…EKAKQVLKII (135 aa)). RNA contacts are provided by residues 416–418 (KSY), D422, 432–433 (WC), N462, W486, and W491.

It belongs to the YTHDF family. YTHDF2 subfamily. In terms of assembly, interacts with CNOT1; interaction is direct and promotes recruitment of the CCR4-NOT complex. Interacts with YTHDF3. Interacts with RIDA/HRSP12; interaction leads to recruitment of the ribonuclease P/MRP complex. Post-translationally, ubiquitinated by the SCF(SKP2) complex, leading to its degradation.

It localises to the cytoplasm. The protein localises to the cytosol. Its subcellular location is the P-body. The protein resides in the stress granule. It is found in the nucleus. Its function is as follows. Specifically recognizes and binds N6-methyladenosine (m6A)-containing RNAs, and regulates their stability. M6A is a modification present at internal sites of mRNAs and some non-coding RNAs and plays a role in mRNA stability and processing. Acts as a regulator of mRNA stability by promoting degradation of m6A-containing mRNAs via interaction with the CCR4-NOT and ribonuclease P/MRP complexes, depending on the context. The YTHDF paralogs (YTHDF1, YTHDF2 and YTHDF3) share m6A-containing mRNAs targets and act redundantly to mediate mRNA degradation and cellular differentiation. M6A-containing mRNAs containing a binding site for RIDA/HRSP12 (5'-GGUUC-3') are preferentially degraded by endoribonucleolytic cleavage: cooperative binding of RIDA/HRSP12 and YTHDF2 to transcripts leads to recruitment of the ribonuclease P/MRP complex. Other m6A-containing mRNAs undergo deadenylation via direct interaction between YTHDF2 and CNOT1, leading to recruitment of the CCR4-NOT and subsequent deadenylation of m6A-containing mRNAs. Required maternally to regulate oocyte maturation: probably acts by binding to m6A-containing mRNAs, thereby regulating maternal transcript dosage during oocyte maturation, which is essential for the competence of oocytes to sustain early zygotic development. Also required during spermatogenesis: regulates spermagonial adhesion by promoting degradation of m6A-containing transcripts coding for matrix metallopeptidases. Also involved in hematopoietic stem cells specification by binding to m6A-containing mRNAs, leading to promote their degradation. Also acts as a regulator of neural development by promoting m6A-dependent degradation of neural development-related mRNA targets. Inhibits neural specification of induced pluripotent stem cells by binding to methylated neural-specific mRNAs and promoting their degradation, thereby restraining neural differentiation. Regulates circadian regulation of hepatic lipid metabolism: acts by promoting m6A-dependent degradation of PPARA transcripts. Regulates the innate immune response to infection by inhibiting the type I interferon response: acts by binding to m6A-containing IFNB transcripts and promoting their degradation. May also act as a promoter of cap-independent mRNA translation following heat shock stress: upon stress, relocalizes to the nucleus and specifically binds mRNAs with some m6A methylation mark at their 5'-UTR, protecting demethylation of mRNAs by FTO, thereby promoting cap-independent mRNA translation. Regulates mitotic entry by promoting the phase-specific m6A-dependent degradation of WEE1 transcripts. Promotes formation of phase-separated membraneless compartments, such as P-bodies or stress granules, by undergoing liquid-liquid phase separation upon binding to mRNAs containing multiple m6A-modified residues: polymethylated mRNAs act as a multivalent scaffold for the binding of YTHDF proteins, juxtaposing their disordered regions and thereby leading to phase separation. The resulting mRNA-YTHDF complexes then partition into different endogenous phase-separated membraneless compartments, such as P-bodies, stress granules or neuronal RNA granules. May also recognize and bind RNAs modified by C5-methylcytosine (m5C) and act as a regulator of rRNA processing. The protein is YTH domain-containing family protein 2 of Macaca fascicularis (Crab-eating macaque).